The primary structure comprises 183 residues: Thioredoxin-like protein CITRX, chloroplastic (183 aa).

The N-terminal 81 residues, 1 to 81 (MALVQSRTFP…REDYLVKKLS (81 aa)), are a transit peptide targeting the chloroplast. The Thioredoxin domain occupies 82-183 (AQELQELVKG…MMHDIIDNEM (102 aa)). Active-site nucleophile residues include cysteine 106 and cysteine 109. The cysteines at positions 106 and 109 are disulfide-linked.

The protein belongs to the thioredoxin family. Plant CITRX-type subfamily. In terms of assembly, interacts with FLN1 and FLN2. Interacts with MRL7.

The protein localises to the plastid. It localises to the chloroplast. Functionally, thiol-disulfide oxidoreductase that plays a role in proper chloroplast development, most likely through regulating plastid-encoded polymerase (PEP) dependent chloroplast transcription. Acts as a component of the transcriptionally active plastid chromosome that is required for plastid gene expression. In Arabidopsis thaliana (Mouse-ear cress), this protein is Thioredoxin-like protein CITRX, chloroplastic.